The following is a 62-amino-acid chain: MLILTRKVGESLLIGDDISITILNIRGNQVKIGIKAPKDVSVHREEIYQRIKQALEAPHVGE.

This sequence belongs to the CsrA/RsmA family. In terms of assembly, homodimer; the beta-strands of each monomer intercalate to form a hydrophobic core, while the alpha-helices form wings that extend away from the core.

Its subcellular location is the cytoplasm. In terms of biological role, a key translational regulator that binds mRNA to regulate translation initiation and/or mRNA stability. Mediates global changes in gene expression, shifting from rapid growth to stress survival by linking envelope stress, the stringent response and the catabolite repression systems. Usually binds in the 5'-UTR; binding at or near the Shine-Dalgarno sequence prevents ribosome-binding, repressing translation, binding elsewhere in the 5'-UTR can activate translation and/or stabilize the mRNA. Its function is antagonized by small RNA(s). The chain is Translational regulator CsrA from Pasteurella multocida (strain Pm70).